The primary structure comprises 354 residues: Methylthioribose-1-phosphate isomerase (354 aa).

Substrate-binding positions include 58–60 (RGA), Arg101, and Gln204. The active-site Proton donor is Asp245. 255 to 256 (NK) serves as a coordination point for substrate.

Belongs to the eIF-2B alpha/beta/delta subunits family. MtnA subfamily.

It carries out the reaction 5-(methylsulfanyl)-alpha-D-ribose 1-phosphate = 5-(methylsulfanyl)-D-ribulose 1-phosphate. It functions in the pathway amino-acid biosynthesis; L-methionine biosynthesis via salvage pathway; L-methionine from S-methyl-5-thio-alpha-D-ribose 1-phosphate: step 1/6. Catalyzes the interconversion of methylthioribose-1-phosphate (MTR-1-P) into methylthioribulose-1-phosphate (MTRu-1-P). This Xylella fastidiosa (strain M12) protein is Methylthioribose-1-phosphate isomerase.